The primary structure comprises 275 residues: Arylalkylamine N-acetyltransferase 1 (275 aa).

Acetyl-CoA-binding positions include 181–183 (LSV) and 189–193 (GLGIA). Residues 181–254 (LSVDTNYRGL…GEVVFKPAAP (74 aa)) enclose the N-acetyltransferase domain.

This sequence belongs to the acetyltransferase family. AANAT subfamily. In terms of tissue distribution, in the adult, expressed in the midgut portion of the thoracic segments and the frontal half of the abdomen (at protein level). Expressed in the epithelial cell layer facing the lumen of the gut (at protein level). In the brain, expressed in a sub-populations of neurons and astrocytes, and in a set of distinct stripes in the optic lobes (at protein level). Expressed mainly in serotonergic neurons but also in subsets of glutamatergic, GABAergic and cholinergic neurons (at protein level).

The protein resides in the cytoplasm. Its subcellular location is the nucleus. It catalyses the reaction a 2-arylethylamine + acetyl-CoA = an N-acetyl-2-arylethylamine + CoA + H(+). The catalysed reaction is serotonin + acetyl-CoA = N-acetylserotonin + CoA + H(+). It carries out the reaction dopamine + acetyl-CoA = N-acetyldopamine + CoA + H(+). The enzyme catalyses tyramine + acetyl-CoA = N-acetyltyramine + CoA + H(+). It catalyses the reaction octopamine + acetyl-CoA = N-acetyloctopamine + CoA + H(+). The catalysed reaction is 5-methoxytryptamine + acetyl-CoA = melatonin + CoA + H(+). It carries out the reaction 2-phenylethylamine + acetyl-CoA = N-(2-phenylethyl)acetamide + CoA + H(+). The enzyme catalyses noradrenaline + acetyl-CoA = N-acetylnoradrenaline + CoA + H(+). It catalyses the reaction tyramine + butanoyl-CoA = N-butanoyltyramine + CoA + H(+). The catalysed reaction is tyramine + hexanoyl-CoA = N-hexanoyltyramine + CoA + H(+). It carries out the reaction tryptamine + acetyl-CoA = N-acetyltryptamine + CoA + H(+). The enzyme catalyses dopamine + hexadecanoyl-CoA = N-hexadecanoyl-dopamine + CoA + H(+). It catalyses the reaction dopamine + (9Z)-octadecenoyl-CoA = N-(9Z-octadecanoyl)-dopamine + CoA + H(+). The catalysed reaction is serotonin + hexadecanoyl-CoA = N-hexadecanoyl-serotonin + CoA + H(+). It carries out the reaction serotonin + (9Z)-octadecenoyl-CoA = N-(9Z-octadecenoyl)-serotonin + CoA + H(+). The enzyme catalyses serotonin + octadecanoyl-CoA = N-octadecanoyl-serotonin + CoA + H(+). It catalyses the reaction serotonin + (5Z,8Z,11Z,14Z)-eicosatetraenoyl-CoA = N-[(5Z,8Z,11Z,14Z)-eicosatetraenoyl]-serotonin + CoA + H(+). It participates in aromatic compound metabolism; melatonin biosynthesis; melatonin from serotonin: step 1/2. With respect to regulation, inhibited by long-chain acyl-CoA thioesters, oleoyl-CoA (an analog of acetyl-CoA) and tyrosol (an analog of tyramine). Catalyzes N-acetylation of tryptamine, tyramine, dopamine, serotonin and octopamine. In astrocytes, regulates sleep homeostasis by limiting the accumulation of serotonin and dopamine in the brain upon sleep deprivation. Is not essential for sclerotization. The polypeptide is Arylalkylamine N-acetyltransferase 1 (Drosophila melanogaster (Fruit fly)).